The following is a 274-amino-acid chain: Large ribosomal subunit protein uL2 (274 aa).

The segment at 223-274 is disordered; the sequence is VAMNPVDHPHGGGEGRTSGGRHPVTPWGVPTKGYKTRSNKRTDKYIVRRRNK.

The protein belongs to the universal ribosomal protein uL2 family. In terms of assembly, part of the 50S ribosomal subunit. Forms a bridge to the 30S subunit in the 70S ribosome.

Functionally, one of the primary rRNA binding proteins. Required for association of the 30S and 50S subunits to form the 70S ribosome, for tRNA binding and peptide bond formation. It has been suggested to have peptidyltransferase activity; this is somewhat controversial. Makes several contacts with the 16S rRNA in the 70S ribosome. The sequence is that of Large ribosomal subunit protein uL2 from Shewanella sp. (strain ANA-3).